The following is a 280-amino-acid chain: Chaperone for lacto-N-biosidase (280 aa).

The signal sequence occupies residues 1 to 37; it reads MPRRHRFAAAIAAVAVAAVLLVTLTVAVVTHGDGAFA.

In terms of assembly, homodimer.

It is found in the secreted. Functionally, chaperone required for active expression of the lacto-N-biosidase LnbX. The sequence is that of Chaperone for lacto-N-biosidase from Bifidobacterium longum subsp. longum (strain ATCC 15707 / DSM 20219 / JCM 1217 / NCTC 11818 / E194b).